The primary structure comprises 511 residues: Chromosomal replication initiator protein DnaA (511 aa).

The domain I, interacts with DnaA modulators stretch occupies residues 1 to 87 (MSVELWQQCV…IGSKRSSAPR (87 aa)). The domain II stretch occupies residues 87–174 (RAAPNAPLAA…QVEGALKHTS (88 aa)). The segment at 133 to 160 (VATHDEPSRDSFDPMAGASSQQAPARAE) is disordered. Basic and acidic residues predominate over residues 134–144 (ATHDEPSRDSF). A domain III, AAA+ region region spans residues 175–391 (YLNRTFTFEN…GALKRVIAHS (217 aa)). Residues Gly219, Gly221, Lys222, and Thr223 each contribute to the ATP site. The tract at residues 392-511 (HFMGRDITIE…YKNLLRTLTT (120 aa)) is domain IV, binds dsDNA.

This sequence belongs to the DnaA family. Oligomerizes as a right-handed, spiral filament on DNA at oriC.

It localises to the cytoplasm. Plays an essential role in the initiation and regulation of chromosomal replication. ATP-DnaA binds to the origin of replication (oriC) to initiate formation of the DNA replication initiation complex once per cell cycle. Binds the DnaA box (a 9 base pair repeat at the origin) and separates the double-stranded (ds)DNA. Forms a right-handed helical filament on oriC DNA; dsDNA binds to the exterior of the filament while single-stranded (ss)DNA is stabiized in the filament's interior. The ATP-DnaA-oriC complex binds and stabilizes one strand of the AT-rich DNA unwinding element (DUE), permitting loading of DNA polymerase. After initiation quickly degrades to an ADP-DnaA complex that is not apt for DNA replication. Binds acidic phospholipids. The sequence is that of Chromosomal replication initiator protein DnaA from Pseudomonas syringae pv. tomato (strain ATCC BAA-871 / DC3000).